The following is a 619-amino-acid chain: MPSYRSRTTTHGRNMAGARGLWRATGMKDSDFGKPIIAVVNSFTQFVPGHVHLKDLGQMVAREIEAAGGVAKEFNTIAVDDGIAMGHDGMLYSLPSRDLIADSVEYMVNAHCADAMVCISNCDKITPGMLMAALRINIPVVFVSGGPMEAGKVVLKGKEVALDLVDAMVAAADEKYSDEEVLAIEQAACPTCGSCSGMFTANSMNCLTEALGLSLPGNGSTLATHADRKELFLRAGRIVVEMCRRHYEEGDDSVLPRNIATFEAFENAMSLDIAMGGSTNTVLHLLAAAHEAGVDFTMEDIDRLSRRVPCLSKVAPAKSDVHMEDVHRAGGIMAILGELDRAGLLHAHLPTVHSATLGDALNKWDIARTNDPEVQKFFMAAPGGVPTQTAFSQARRWDSLDLDRISGVIRSADHAFSKDGGLAVLSGNVAPDGCIVKTAGVDESILKFSGPAKVFESQDAAVAGILTGQVEAGDVVVIRYEGPKGGPGMQEMLYPTSYLKSKGLGAACALVTDGRFSGGTSGLSIGHVSPEAAEGGTIGLVENGDLINIDIPSRTITLAVADSVLAERRAAMEAKGDAAWQPAKPRPRKVSVALQAYAAMTTSAARGAVRDLSQLKGKG.

Residue D81 coordinates Mg(2+). [2Fe-2S] cluster is bound at residue C122. Mg(2+) is bound by residues D123 and K124. K124 is subject to N6-carboxylysine. C195 provides a ligand contact to [2Fe-2S] cluster. E491 contacts Mg(2+). The active-site Proton acceptor is the S517.

This sequence belongs to the IlvD/Edd family. Homodimer. The cofactor is [2Fe-2S] cluster. Requires Mg(2+) as cofactor.

The catalysed reaction is (2R)-2,3-dihydroxy-3-methylbutanoate = 3-methyl-2-oxobutanoate + H2O. It carries out the reaction (2R,3R)-2,3-dihydroxy-3-methylpentanoate = (S)-3-methyl-2-oxopentanoate + H2O. It functions in the pathway amino-acid biosynthesis; L-isoleucine biosynthesis; L-isoleucine from 2-oxobutanoate: step 3/4. Its pathway is amino-acid biosynthesis; L-valine biosynthesis; L-valine from pyruvate: step 3/4. In terms of biological role, functions in the biosynthesis of branched-chain amino acids. Catalyzes the dehydration of (2R,3R)-2,3-dihydroxy-3-methylpentanoate (2,3-dihydroxy-3-methylvalerate) into 2-oxo-3-methylpentanoate (2-oxo-3-methylvalerate) and of (2R)-2,3-dihydroxy-3-methylbutanoate (2,3-dihydroxyisovalerate) into 2-oxo-3-methylbutanoate (2-oxoisovalerate), the penultimate precursor to L-isoleucine and L-valine, respectively. This is Dihydroxy-acid dehydratase from Sphingopyxis alaskensis (strain DSM 13593 / LMG 18877 / RB2256) (Sphingomonas alaskensis).